The following is a 200-amino-acid chain: MSSLEINNSCFSLETKLPSSHQSVEDSASEPSGYEAKDPPQDTLKDVDDVLEKPKDIIQFTAKKLSVGEVSQLVVSPLCGAVSLFVGTTRNNFEGKKVISLEYEAYLPMAENEIRKICNDIRQKWPVRHIAVFHRLGLVPVSEASTVIAVSSAHRAASLEAVSYAIDSLKAKVPIWKKEIYEESTSSWKRNKECFWAADD.

Polar residues predominate over residues 16–30; the sequence is KLPSSHQSVEDSASE. The tract at residues 16-43 is disordered; that stretch reads KLPSSHQSVEDSASEPSGYEAKDPPQDT. At S20 the chain carries Phosphoserine. Residues 154–155, K170, and 177–179 each bind substrate; these read HR and KKE.

Belongs to the MoaE family. MOCS2B subfamily. As to quaternary structure, heterotetramer; composed of 2 small (MOCS2A) and 2 large (MOCS2B) subunits.

The protein resides in the cytoplasm. It is found in the cytosol. The catalysed reaction is 2 [molybdopterin-synthase sulfur-carrier protein]-C-terminal-Gly-aminoethanethioate + cyclic pyranopterin phosphate + H2O = molybdopterin + 2 [molybdopterin-synthase sulfur-carrier protein]-C-terminal Gly-Gly + 2 H(+). Its pathway is cofactor biosynthesis; molybdopterin biosynthesis. Catalytic subunit of the molybdopterin synthase complex, a complex that catalyzes the conversion of precursor Z into molybdopterin. Acts by mediating the incorporation of 2 sulfur atoms from thiocarboxylated MOCS2A into precursor Z to generate a dithiolene group. The chain is Molybdopterin synthase catalytic subunit from Rattus norvegicus (Rat).